Here is a 172-residue protein sequence, read N- to C-terminus: Calcium channel flower homolog (172 aa).

Topologically, residues 1–32 (MSSSGGAPGASASSAPPAQEEGMTWWYRWLCR) are cytoplasmic. A helical membrane pass occupies residues 33 to 53 (LSGVLGAVSCAISGLFNCITI). The Extracellular segment spans residues 54 to 57 (HPLN). A helical membrane pass occupies residues 58-78 (IAAGVWMIMNAFILLLCEAPF). Over 79–102 (CCQFIEFANTVAEKVDRLRSWQKA) the chain is Cytoplasmic. The helical transmembrane segment at 103-123 (VFYCGMAVVPIVISLTLTTLL) threads the bilayer. Residues 124 to 125 (GN) are Extracellular-facing. The chain crosses the membrane as a helical span at residues 126 to 142 (AIAFATGVLYGLSALGK). The Cytoplasmic portion of the chain corresponds to 143 to 172 (KGDAISYARIQQQRQQADEEKLAETLEGEL).

Belongs to the calcium channel flower family. In terms of assembly, interacts with adaptor protein complex 2 (AP-2). Detected in skin cells at low levels of expression (at protein level).

It localises to the cell membrane. It is found in the cytoplasmic vesicle. Its subcellular location is the secretory vesicle. The protein localises to the synaptic vesicle. The protein resides in the golgi apparatus. It localises to the vesicle. It is found in the early endosome. Its subcellular location is the recycling endosome. The protein localises to the endoplasmic reticulum membrane. Its function is as follows. Transmembrane protein which mediates synaptic endocytosis and fitness-based cell culling. In response to different stimulus strengths, controls two major modes of synaptic vesicle (SV) retrieval in hippocampal neurons; Clathrin-mediated endocytosis (CME) in response to mild stimulation and activity-dependent bulk endocytosis (ADBE) in response to strong stimulation. In cytotoxic T-lymphoocytes (CTLs) facilitates calcium-dependent endocytosis of cytotoxic granules at the immuno synapse. Different isoforms work as fitness fingerprints in 'loser' and 'winner' cells and thereby mediate win/lose decisions as part of the cell competition process. Functionally, functions with the other flower isoforms to produce tissue-specific fitness fingerprints that identify unfit or fit cells during cell selection processes in order to maintain tissue health. During cell competition, if levels of this isoform in cells is higher than in the surrounding neighboring cells, the cells are recognized as 'winner' cells, and do not undergo elimination via apoptosis. Functions with the other flower isoforms to produce tissue-specific fitness fingerprints that identify unfit or fit cells during cell selection processes in order to maintain tissue health. During cell competition, if levels of this isoform in unfit cells is higher than in the surrounding neighboring cells, the cells are recognized as 'loser' cells, and undergo elimination via apoptosis to be replaced by the surrounding healthy 'winner' cell population. The polypeptide is Calcium channel flower homolog (CACFD1) (Homo sapiens (Human)).